Reading from the N-terminus, the 150-residue chain is Transmembrane protein 35B (150 aa).

Positions methionine 1 to alanine 21 are cleaved as a signal peptide. 3 helical membrane passes run threonine 62 to leucine 82, glutamate 84 to leucine 104, and tyrosine 111 to alanine 131.

The protein belongs to the DoxX family.

The protein localises to the membrane. This chain is Transmembrane protein 35B, found in Mus musculus (Mouse).